A 244-amino-acid polypeptide reads, in one-letter code: 5-oxoprolinase subunit A (244 aa).

Belongs to the LamB/PxpA family. Forms a complex composed of PxpA, PxpB and PxpC.

It catalyses the reaction 5-oxo-L-proline + ATP + 2 H2O = L-glutamate + ADP + phosphate + H(+). Catalyzes the cleavage of 5-oxoproline to form L-glutamate coupled to the hydrolysis of ATP to ADP and inorganic phosphate. The polypeptide is 5-oxoprolinase subunit A (Shigella boydii serotype 18 (strain CDC 3083-94 / BS512)).